The chain runs to 404 residues: Phosphoglycerate kinase (404 aa).

Residues 22 to 24 (DLN), R37, 60 to 63 (HLGR), R119, and R156 each bind substrate. Residues K206, G302, E333, and 359-362 (GGDS) each bind ATP.

This sequence belongs to the phosphoglycerate kinase family. In terms of assembly, monomer.

The protein resides in the cytoplasm. The enzyme catalyses (2R)-3-phosphoglycerate + ATP = (2R)-3-phospho-glyceroyl phosphate + ADP. It participates in carbohydrate degradation; glycolysis; pyruvate from D-glyceraldehyde 3-phosphate: step 2/5. The sequence is that of Phosphoglycerate kinase from Clavibacter michiganensis subsp. michiganensis (strain NCPPB 382).